A 43-amino-acid polypeptide reads, in one-letter code: Defensin (43 aa).

Disulfide bonds link Cys-3–Cys-34, Cys-20–Cys-39, and Cys-24–Cys-41.

The protein localises to the secreted. Functionally, antibacterial peptide. Affects Gram-negative bacteria including methicillin-resistant Staphylococcus aureus. The sequence is that of Defensin from Trypoxylus dichotomus (Japanese rhinoceros beetle).